Reading from the N-terminus, the 321-residue chain is Ferredoxin--NADP reductase (321 aa).

The FAD site is built by D28, Q36, Y41, A81, F115, D274, and S315.

This sequence belongs to the ferredoxin--NADP reductase type 2 family. In terms of assembly, homodimer. It depends on FAD as a cofactor.

The catalysed reaction is 2 reduced [2Fe-2S]-[ferredoxin] + NADP(+) + H(+) = 2 oxidized [2Fe-2S]-[ferredoxin] + NADPH. This is Ferredoxin--NADP reductase from Frankia casuarinae (strain DSM 45818 / CECT 9043 / HFP020203 / CcI3).